Here is a 171-residue protein sequence, read N- to C-terminus: Antimicrobial protein CAP18 (171 aa).

An N-terminal signal peptide occupies residues 1 to 29 (METHKHGPSLAWWSLLLLLLGLLMPPAIA). Disulfide bonds link Cys-85/Cys-96 and Cys-107/Cys-124.

It belongs to the cathelicidin family. Neutrophils.

It localises to the secreted. Functionally, CAP18 binds to the lipid A moiety of bacterial lipopolysaccharides (LPS), a glycolipid present in the outer membrane of all Gram-negative bacteria. Has antibiotic activity. The chain is Antimicrobial protein CAP18 (CAP18) from Oryctolagus cuniculus (Rabbit).